Here is a 380-residue protein sequence, read N- to C-terminus: Homoserine O-acetyltransferase (380 aa).

The AB hydrolase-1 domain maps to 70 to 366 (NAVLVFHALT…SPHGHDAFLI (297 aa)). Residue S186 is the Nucleophile of the active site. R250 contacts substrate. Residues D333 and H361 contribute to the active site. D362 is a substrate binding site.

Belongs to the AB hydrolase superfamily. MetX family. In terms of assembly, homodimer.

It is found in the cytoplasm. The catalysed reaction is L-homoserine + acetyl-CoA = O-acetyl-L-homoserine + CoA. Its pathway is amino-acid biosynthesis; L-methionine biosynthesis via de novo pathway; O-acetyl-L-homoserine from L-homoserine: step 1/1. In terms of biological role, transfers an acetyl group from acetyl-CoA to L-homoserine, forming acetyl-L-homoserine. The sequence is that of Homoserine O-acetyltransferase from Thermus thermophilus (strain ATCC 27634 / DSM 579 / HB8).